The primary structure comprises 272 residues: Undecaprenyl-diphosphatase (272 aa).

The next 8 helical transmembrane spans lie at 4–24 (FEVIKALFLGFVEGLTEFLPI), 43–63 (GGRVFEVVIQLGAILAVCWLY), 86–106 (ISVLIAFFPAVIIGVLAVDFI), 109–129 (VLFSPIVVAIALIVGALIIFW), 145–165 (ITFKQALLVGLAQCVAMIPGT), 186–206 (TEFSFFLAMPTMLGAATFDLI), 222–242 (VGFVAAFIAALLVVKALVLFV), and 249–269 (VFAWYRIVLGVIILIAAMFFN).

Belongs to the UppP family.

Its subcellular location is the cell inner membrane. The enzyme catalyses di-trans,octa-cis-undecaprenyl diphosphate + H2O = di-trans,octa-cis-undecaprenyl phosphate + phosphate + H(+). Catalyzes the dephosphorylation of undecaprenyl diphosphate (UPP). Confers resistance to bacitracin. This is Undecaprenyl-diphosphatase from Acinetobacter baumannii (strain SDF).